We begin with the raw amino-acid sequence, 390 residues long: Delta-aminolevulinic acid dehydratase, chloroplastic (390 aa).

The N-terminal 24 residues, 1-24 (MQMMQRNVVGQRPVAGSRRSLVVA), are a transit peptide targeting the chloroplast. The tract at residues 34–69 (VSTNGKHRTGVPEGTPIVTPQDLPSRPRRNRRSESF) is disordered. Residue Lys-251 is the Schiff-base intermediate with substrate of the active site. 5-aminolevulinate-binding residues include Arg-261 and Lys-281. Glu-297 is a binding site for Mg(2+). Lys-312 functions as the Schiff-base intermediate with substrate in the catalytic mechanism. Residues Ser-338 and Tyr-377 each contribute to the 5-aminolevulinate site.

It belongs to the ALAD family. In terms of assembly, homooctamer. The cofactor is Mg(2+).

The protein resides in the plastid. It localises to the chloroplast. The enzyme catalyses 2 5-aminolevulinate = porphobilinogen + 2 H2O + H(+). Its pathway is porphyrin-containing compound metabolism; protoporphyrin-IX biosynthesis; coproporphyrinogen-III from 5-aminolevulinate: step 1/4. Catalyzes an early step in the biosynthesis of tetrapyrroles. Binds two molecules of 5-aminolevulinate per subunit, each at a distinct site, and catalyzes their condensation to form porphobilinogen. This is Delta-aminolevulinic acid dehydratase, chloroplastic (HEMB) from Chlamydomonas reinhardtii (Chlamydomonas smithii).